Consider the following 107-residue polypeptide: Large ribosomal subunit protein uL24 (107 aa).

Belongs to the universal ribosomal protein uL24 family. Part of the 50S ribosomal subunit.

In terms of biological role, one of two assembly initiator proteins, it binds directly to the 5'-end of the 23S rRNA, where it nucleates assembly of the 50S subunit. Functionally, one of the proteins that surrounds the polypeptide exit tunnel on the outside of the subunit. In Nitratidesulfovibrio vulgaris (strain DSM 19637 / Miyazaki F) (Desulfovibrio vulgaris), this protein is Large ribosomal subunit protein uL24.